Reading from the N-terminus, the 268-residue chain is Zinc finger protein SNAI2 (268 aa).

Residues 1-20 are SNAG domain; it reads MPRSFLVKKHFNASKKPNYS. The tract at residues 84-116 is disordered; the sequence is GRVSPLPSSDTSSKDHSGSESPISDEEERLQPK. C2H2-type zinc fingers lie at residues 128–150, 159–181, 185–207, and 213–235; these read FQCN…KQLH, FSCK…IRTH, CVCK…IRTH, and FSCP…LQTH. The C2H2-type 5; atypical zinc finger occupies 241 to 264; it reads YQCKNCSKTFSRMSLLHKHEESGC.

Belongs to the snail C2H2-type zinc-finger protein family. As to quaternary structure, interacts (via SNAG domain) with LIMD1 (via LIM domains), WTIP (via LIM domains) and AJUBA (via LIM domains). Interacts (via zinc fingers) with KPNA2, KPNB1 and TNPO1. May interact (via zinc fingers) with IPO7. Post-translationally, phosphorylated by GSK3B. Once phosphorylated, it becomes a target for ubiquitination. In terms of processing, ubiquitinated by the SCF(FBXO11) complex; ubiquitination requires previous GSK3B-mediated SNAI2 phosphorylation.

Its subcellular location is the nucleus. It is found in the cytoplasm. Its function is as follows. Transcriptional repressor that modulates both activator-dependent and basal transcription. Involved in the generation and migration of neural crest cells. Plays a role in mediating RAF1-induced transcriptional repression of the TJ protein, occludin (OCLN) and subsequent oncogenic transformation of epithelial cells. Represses BRCA2 expression by binding to its E2-box-containing silencer and recruiting CTBP1 and HDAC1 in breast cells. In epidermal keratinocytes, binds to the E-box in ITGA3 promoter and represses its transcription. Involved in the regulation of ITGB1 and ITGB4 expression and cell adhesion and proliferation in epidermal keratinocytes. Binds to E-box2 domain of BSG and activates its expression during TGFB1-induced epithelial-mesenchymal transition (EMT) in hepatocytes. Represses E-Cadherin/CDH1 transcription via E-box elements. Involved in osteoblast maturation. Binds to RUNX2 and SOC9 promoters and may act as a positive and negative transcription regulator, respectively, in osteoblasts. Binds to CXCL12 promoter via E-box regions in mesenchymal stem cells and osteoblasts. Plays an essential role in TWIST1-induced EMT and its ability to promote invasion and metastasis. This chain is Zinc finger protein SNAI2 (Snai2), found in Rattus norvegicus (Rat).